The sequence spans 352 residues: MEFQKYRTMHFPRDVYIGHDVLNRVLDVVDQNSRTRDVIIVTGNTTYELAGKKIVEILASSPYEVHLSFAGEANYENLKKIEEETNDVNAGIIIGVGGGTKIDLAKKLAYDKNLPFISIPTSPSHDGIASPRASLRRNGISYSEEGAMPIGVIADTSVMIKAPYRYLAAGAADVISNISAVKDWKLAHRLRGEEFSSSAAAMSEYSAQEVISQVGEIRKYDESSVWLVTKNILASGTAMAIAGNSRPGSGSEHLFAHALEAAGVNNMLHGEMCAMGTIVSLYLHDDNWQKIRDVFESLGVSVKARDYGLKEEVVIEALRRAHAIRPERYTILGESDMSYDAAVKALELTGII.

NAD(+) is bound by residues 99–103 and 121–124; these read GTKID and TSPS. D126 provides a ligand contact to substrate. Residue S130 participates in NAD(+) binding. Residue D173 participates in substrate binding. The Zn(2+) site is built by D173 and H253. H257 contacts substrate. H269 is a binding site for Zn(2+).

Belongs to the glycerol-1-phosphate dehydrogenase family. Zn(2+) serves as cofactor.

Its subcellular location is the cytoplasm. It carries out the reaction sn-glycerol 1-phosphate + NAD(+) = dihydroxyacetone phosphate + NADH + H(+). The catalysed reaction is sn-glycerol 1-phosphate + NADP(+) = dihydroxyacetone phosphate + NADPH + H(+). The protein operates within membrane lipid metabolism; glycerophospholipid metabolism. Its function is as follows. Catalyzes the NAD(P)H-dependent reduction of dihydroxyacetonephosphate (DHAP or glycerone phosphate) to glycerol 1-phosphate (G1P). The G1P thus generated is used as the glycerophosphate backbone of phospholipids in the cellular membranes of Archaea. This chain is Glycerol-1-phosphate dehydrogenase [NAD(P)+], found in Thermoplasma volcanium (strain ATCC 51530 / DSM 4299 / JCM 9571 / NBRC 15438 / GSS1).